Here is a 117-residue protein sequence, read N- to C-terminus: Small ribosomal subunit protein bS6 (117 aa).

The tract at residues 96–117 (HAEGPSVQMQKRDERDSRRERR) is disordered. Residues 105 to 117 (QKRDERDSRRERR) show a composition bias toward basic and acidic residues.

It belongs to the bacterial ribosomal protein bS6 family.

Its function is as follows. Binds together with bS18 to 16S ribosomal RNA. The sequence is that of Small ribosomal subunit protein bS6 from Ruegeria pomeroyi (strain ATCC 700808 / DSM 15171 / DSS-3) (Silicibacter pomeroyi).